A 663-amino-acid chain; its full sequence is Guanine nucleotide exchange factor subunit RGP1 (663 aa).

6 positions are modified to phosphoserine: S351, S354, S357, S363, S364, and S370. The tract at residues 412 to 443 (GKDEDSSDPEPNDSHFSNEMVTSAESSLRSDA) is disordered. Residues 426–440 (HFSNEMVTSAESSLR) are compositionally biased toward polar residues.

The protein belongs to the RGP1 family. Forms a complex with RIC1.

The protein localises to the golgi apparatus. Functionally, the RIC1-RGP1 complex acts as a guanine nucleotide exchange factor (GEF), which activates YPT6 by exchanging bound GDP for free GTP. It is thereby required for efficient fusion of endosome-derived vesicles with the Golgi. The RIC1-RGP1 participates in the recycling of SNC1, presumably by mediating fusion of endosomal vesicles with the Golgi compartment. Its function is as follows. Required for proper mitotic growth. The chain is Guanine nucleotide exchange factor subunit RGP1 from Saccharomyces cerevisiae (strain ATCC 204508 / S288c) (Baker's yeast).